The primary structure comprises 773 residues: Carnitine O-palmitoyltransferase 1, liver isoform (773 aa).

Ala2 is subject to N-acetylalanine. Residues 2–47 (AEAHQAVAFQFTVTPDGIDLRLSHEALKQICLSGLHSWKKKFIRFK) lie on the Cytoplasmic side of the membrane. Residues 48-73 (NGIITGVFPANPSSWLIVVVGVISSM) traverse the membrane as a helical segment. The Mitochondrial intermembrane portion of the chain corresponds to 74–102 (HAKVDPSLGMIAKISRTLDTTGRMSSQTK). The helical transmembrane segment at 103 to 122 (NIVSGVLFGTGLWVAVIMTM) threads the bilayer. Residues 123–773 (RYSLKVLLSY…LFGLTINSKK (651 aa)) are Cytoplasmic-facing. 3'-nitrotyrosine is present on Tyr282. His473 serves as the catalytic Proton acceptor. Position 555 to 567 (555 to 567 (GKGLIKKCRTSPD)) interacts with CoA. Thr588 carries the post-translational modification Phosphothreonine. Residue Tyr589 is modified to 3'-nitrotyrosine. (R)-carnitine is bound by residues Tyr589 and Thr602. Residue Thr604 is modified to Phosphothreonine. Phosphoserine is present on residues Ser741 and Ser747.

Belongs to the carnitine/choline acetyltransferase family. Homohexamer and homotrimer. Identified in a complex that contains at least CPT1A, ACSL1 and VDAC1. Also identified in complexes with ACSL1 and VDAC2 and VDAC3. Interacts with ZDHHC4. Liver and kidney.

Its subcellular location is the mitochondrion outer membrane. It carries out the reaction (R)-carnitine + hexadecanoyl-CoA = O-hexadecanoyl-(R)-carnitine + CoA. The catalysed reaction is succinyl-CoA + L-lysyl-[protein] = N(6)-succinyl-L-lysyl-[protein] + CoA + H(+). Its pathway is lipid metabolism; fatty acid beta-oxidation. Inhibited by malonyl-CoA. Functionally, catalyzes the transfer of the acyl group of long-chain fatty acid-CoA conjugates onto carnitine, an essential step for the mitochondrial uptake of long-chain fatty acids and their subsequent beta-oxidation in the mitochondrion. Also possesses a lysine succinyltransferase activity that can regulate enzymatic activity of substrate proteins such as ENO1 and metabolism independent of its classical carnitine O-palmitoyltransferase activity. Plays an important role in hepatic triglyceride metabolism. Also plays a role in inducible regulatory T-cell (iTreg) differentiation once activated by butyryl-CoA that antagonizes malonyl-CoA-mediated CPT1A repression. Sustains the IFN-I response by recruiting ZDHCC4 to palmitoylate MAVS at the mitochondria leading to MAVS stabilization and activation. In Rattus norvegicus (Rat), this protein is Carnitine O-palmitoyltransferase 1, liver isoform (Cpt1a).